The chain runs to 595 residues: MGKKSRVKTQKSGTGATATVSPKEILNLTSELLQKCSSPAPGPGKEWEEYVQIRTLVEKIRKKQKGLSVTFDGKREDYFPDLMKWASENGASVEGFEMVNFKEEGFGLRATRDIKAEELFLWVPRKLLMTVESAKNSVLGPLYSQDRILQAMGNIALAFHLLCERASPNSFWQPYIQTLPSEYDTPLYFEEEEVRYLQSTQAVHDVFSQYKNTARQYAYFYKVIQTHPHANKLPLKDSFTYEDYRWAVSSVMTRQNQIPTEDGSRVTLALIPLWDMCNHTNGLITTGYNLEDDRCECVALQDFRAGEQIYIFYGTRSNAEFVIHSGFFFDNNSHDRVKIKLGVSKSDRLYAMKAEVLARAGIPTSSVFALHFTEPPISAQLLAFLRVFCMTEEELKEHLLGDNAIDRIFTLGNSEFPVSWDNEVKLWTFLEDRASLLLKTYKTTIEEDKSVLKNQDLSVRAKMAIKLRLGEKEILEKAVKSAAVNREYYRQQMEEKAPLPKYEESNLGLLESSMGDSRLPLVLRNLEEEAGVQDALSIREAISKATATENGLVNGENSIPNGTRSEDENLNQEESKRAVEDAKGSSSDRADAVKE.

A disordered region spans residues 1 to 22; the sequence is MGKKSRVKTQKSGTGATATVSP. The segment covering 10–20 has biased composition (polar residues); it reads QKSGTGATATV. Residues Arg-75, 104–106, Arg-254, 275–279, and 325–327 each bind S-adenosyl-L-methionine; these read EGF, DMCNH, and SGF. In terms of domain architecture, SET spans 94–314; that stretch reads EGFEMVNFKE…AGEQIYIFYG (221 aa). Residue Ser-513 is modified to Phosphoserine. Residues 549-563 show a composition bias toward polar residues; the sequence is ENGLVNGENSIPNGT. The tract at residues 549–595 is disordered; sequence ENGLVNGENSIPNGTRSEDENLNQEESKRAVEDAKGSSSDRADAVKE. The span at 573-595 shows a compositional bias: basic and acidic residues; it reads EESKRAVEDAKGSSSDRADAVKE.

This sequence belongs to the class V-like SAM-binding methyltransferase superfamily. SETD3 actin-histidine methyltransferase family. As to quaternary structure, interacts with MYOD1. In terms of processing, phosphorylated by GSK3B, which is required for recognition by the SCF(FBXW7) complex and subsequent degradation. Post-translationally, ubiquitinated by the SCF(FBXW7) complex following phosphorylation by GSK3B, leading to its degradation by the proteasome.

It is found in the cytoplasm. Its subcellular location is the nucleus. The enzyme catalyses L-histidyl-[protein] + S-adenosyl-L-methionine = N(tele)-methyl-L-histidyl-[protein] + S-adenosyl-L-homocysteine + H(+). Functionally, protein-histidine N-methyltransferase that specifically mediates 3-methylhistidine (tele-methylhistidine) methylation of actin at 'His-73'. Histidine methylation of actin is required for smooth muscle contraction of the laboring uterus during delivery. Does not have protein-lysine N-methyltransferase activity and probably only catalyzes histidine methylation of actin. This chain is Actin-histidine N-methyltransferase, found in Callithrix jacchus (White-tufted-ear marmoset).